Consider the following 149-residue polypeptide: Protegrin-4 (149 aa).

A signal peptide spans M1–A29. Positions Q30–V130 are excised as a propeptide. The disordered stretch occupies residues D61 to V80. Intrachain disulfides connect C85-C96, C107-C124, C136-C145, and C138-C143. Arginine amide is present on R148.

The protein belongs to the cathelicidin family.

It is found in the secreted. Its function is as follows. Microbicidal activity. This Sus scrofa (Pig) protein is Protegrin-4 (NPG4).